The primary structure comprises 334 residues: o-succinylbenzoate synthase (334 aa).

The active-site Proton donor is the lysine 107. Aspartate 135, glutamate 162, and aspartate 185 together coordinate Mg(2+). Lysine 209 acts as the Proton acceptor in catalysis.

This sequence belongs to the mandelate racemase/muconate lactonizing enzyme family. MenC type 1 subfamily. The cofactor is a divalent metal cation.

The catalysed reaction is (1R,6R)-6-hydroxy-2-succinyl-cyclohexa-2,4-diene-1-carboxylate = 2-succinylbenzoate + H2O. Its pathway is quinol/quinone metabolism; 1,4-dihydroxy-2-naphthoate biosynthesis; 1,4-dihydroxy-2-naphthoate from chorismate: step 4/7. It functions in the pathway quinol/quinone metabolism; menaquinone biosynthesis. Its function is as follows. Converts 2-succinyl-6-hydroxy-2,4-cyclohexadiene-1-carboxylate (SHCHC) to 2-succinylbenzoate (OSB). In Mycobacterium leprae (strain TN), this protein is o-succinylbenzoate synthase.